We begin with the raw amino-acid sequence, 840 residues long: V-type proton ATPase subunit a, vacuolar isoform (840 aa).

A2 carries the N-acetylalanine modification. Residues 2-404 (AEKEEAIFRS…DCYGIAQYRE (403 aa)) lie on the Cytoplasmic side of the membrane. Residues 117-145 (LEERLIQMEDATDQIEVQKNDLEQYRFIL) adopt a coiled-coil conformation. Residues 405–423 (INAGLPTIVTFPFMFAIMF) form a helical membrane-spanning segment. Over 424–425 (GD) the chain is Vacuolar. A helical transmembrane segment spans residues 426 to 442 (MGHGFLMTLAALSLVLN). At 443–456 (EKKINKMKRGEIFD) the chain is on the cytoplasmic side. A helical membrane pass occupies residues 457-486 (MAFTGRYIILLMGVFSMYTGFLYNDIFSKT). Topologically, residues 487–534 (MTIFKSGWKWPDHWKKGESITATSVGTYPIGLDWAWHGTENALLFSNS) are vacuolar. The chain crosses the membrane as a helical span at residues 535-554 (YKMKLSILMGFIHMTYSYFF). Residues 555–572 (SLANHLYFNSMIDIIGNF) lie on the Cytoplasmic side of the membrane. A helical membrane pass occupies residues 573–593 (IPGLLFMQGIFGYLSVCIVYK). At 594–636 (WAVDWVKDGKPAPGLLNMLINMFLSPGTIDDELYPHQAKVQVF) the chain is on the vacuolar side. A helical transmembrane segment spans residues 637 to 656 (LLLMALVCIPWLLLVKPLHF). The Cytoplasmic segment spans residues 657-719 (KFTHKKKSHE…DIMIHQVIHT (63 aa)). Residues 720–744 (IEFCLNCVSHTASYLRLWALSLAHA) traverse the membrane as a helical segment. Topologically, residues 745 to 765 (QLSSVLWTMTIQIAFGFRGFV) are vacuolar. Residues 766–804 (GVFMTVALFAMWFALTCAVLVLMEGTSAMLHSLRLHWVE) form a helical membrane-spanning segment. Topologically, residues 805–840 (SMSKFFVGEGLPYEPFAFEYKDMEVAVASASSSASS) are cytoplasmic.

This sequence belongs to the V-ATPase 116 kDa subunit family. As to quaternary structure, V-ATPase is a heteromultimeric enzyme composed of a peripheral catalytic V1 complex (components A to H) attached to an integral membrane V0 proton pore complex (components: a, c, c', c'', d, e, f and VOA1). Post-translationally, glycosylated.

Its subcellular location is the vacuole membrane. In terms of biological role, subunit of the V0 complex of vacuolar(H+)-ATPase (V-ATPase), a multisubunit enzyme composed of a peripheral complex (V1) that hydrolyzes ATP and a membrane integral complex (V0) that translocates protons. V-ATPase is responsible for acidifying and maintaining the pH of intracellular compartments. Is present only in vacuolar V-ATPase complexes; enzymes containing this subunit have a 4-fold higher ratio of proton transport to ATP hydrolysis than complexes containing the Golgi/endosomal isoform and undergo reversible dissociation of V1 and V0 in response to glucose depletion. The sequence is that of V-type proton ATPase subunit a, vacuolar isoform from Saccharomyces cerevisiae (strain ATCC 204508 / S288c) (Baker's yeast).